A 217-amino-acid polypeptide reads, in one-letter code: Non-structural protein NS3 (217 aa).

The protein belongs to the orbivirus NS3 family.

Functionally, may play a role in the release of virions from infected cells. The chain is Non-structural protein NS3 (Segment-10) from Camelus dromedarius (Dromedary).